Consider the following 206-residue polypeptide: Peptidyl-tRNA hydrolase (206 aa).

Residue Tyr-14 participates in tRNA binding. Residue His-19 is the Proton acceptor of the active site. Positions 64, 66, and 112 each coordinate tRNA.

It belongs to the PTH family. In terms of assembly, monomer.

It localises to the cytoplasm. The catalysed reaction is an N-acyl-L-alpha-aminoacyl-tRNA + H2O = an N-acyl-L-amino acid + a tRNA + H(+). In terms of biological role, hydrolyzes ribosome-free peptidyl-tRNAs (with 1 or more amino acids incorporated), which drop off the ribosome during protein synthesis, or as a result of ribosome stalling. Its function is as follows. Catalyzes the release of premature peptidyl moieties from peptidyl-tRNA molecules trapped in stalled 50S ribosomal subunits, and thus maintains levels of free tRNAs and 50S ribosomes. This is Peptidyl-tRNA hydrolase from Rhodopseudomonas palustris (strain ATCC BAA-98 / CGA009).